A 318-amino-acid polypeptide reads, in one-letter code: Zinc chaperone YjiA (318 aa).

11 to 19 (GFLGAGKTT) contributes to the GTP binding site. Glu-37, Glu-42, Cys-66, Glu-74, and His-114 together coordinate Zn(2+). Positions 64–67 (CICC) match the CXCC motif motif. Asp-161 contacts GTP. Positions 167, 170, and 187 each coordinate Zn(2+). One can recognise a CobW C-terminal domain in the interval 224 to 315 (ISSIVVELDY…EEEIRAAFAG (92 aa)).

Belongs to the SIMIBI class G3E GTPase family. ZNG1 subfamily. Monomer in the apo form. Metal binding induces oligomerization. Forms homodimers and higher oligomers.

The catalysed reaction is GTP + H2O = GDP + phosphate + H(+). Its activity is regulated as follows. GTPase activity is inhibited by metal binding. Activity is decreased in the presence of Co(II) or Ni(II), and is completely inhibited in the presence of Zn(II). Zinc chaperone that directly transfers zinc cofactor to target proteins, thereby activating them. Zinc is transferred from the CXCC motif in the GTPase domain to the zinc binding site in target proteins in a process requiring GTP hydrolysis. The sequence is that of Zinc chaperone YjiA (yjiA) from Escherichia coli (strain K12).